The following is a 99-amino-acid chain: Citrate lyase acyl carrier protein (99 aa).

An O-(phosphoribosyl dephospho-coenzyme A)serine modification is found at Ser14.

It belongs to the CitD family. As to quaternary structure, oligomer with a subunit composition of (alpha,beta,gamma)6.

Its subcellular location is the cytoplasm. Functionally, covalent carrier of the coenzyme of citrate lyase. In Edwardsiella ictaluri (strain 93-146), this protein is Citrate lyase acyl carrier protein.